We begin with the raw amino-acid sequence, 125 residues long: Ribosome-binding factor A (125 aa).

Belongs to the RbfA family. Monomer. Binds 30S ribosomal subunits, but not 50S ribosomal subunits or 70S ribosomes.

Its subcellular location is the cytoplasm. One of several proteins that assist in the late maturation steps of the functional core of the 30S ribosomal subunit. Associates with free 30S ribosomal subunits (but not with 30S subunits that are part of 70S ribosomes or polysomes). Required for efficient processing of 16S rRNA. May interact with the 5'-terminal helix region of 16S rRNA. The polypeptide is Ribosome-binding factor A (Chloroherpeton thalassium (strain ATCC 35110 / GB-78)).